Here is a 551-residue protein sequence, read N- to C-terminus: PA-phosphatase related-family protein DDB_G0268928 (551 aa).

Polar residues-rich tracts occupy residues 26 to 47 and 137 to 152; these read TESLSDIDSQTDINNTGNSGKD and KYNTRNSGTLRNSSNK. 2 disordered regions span residues 26-50 and 123-172; these read TESLSDIDSQTDINNTGNSGKDYSS and KGED…NNNN. The span at 153–171 shows a compositional bias: low complexity; it reads TQTTVLNNSTTSSNNINNN. 7 consecutive transmembrane segments (helical) span residues 211–231, 232–252, 273–293, 346–366, 393–413, 474–494, and 500–520; these read SYSDATFSILSGVVILFSIIY, SLLVGPIQIMFAFLVSILVFI, LAVGLGLTIPSFFAATGAVVL, ILQLSYISYYIWGYFMEIYIL, MFICSWISTYFIVFSINLIFP, ILPAYGFVSTIAAILIAIATM, and YFVDFLAALPVTIFCLLYGGF.

The protein belongs to the PA-phosphatase related phosphoesterase family.

The protein localises to the membrane. In Dictyostelium discoideum (Social amoeba), this protein is PA-phosphatase related-family protein DDB_G0268928.